The chain runs to 335 residues: Olfactory receptor 52B6 (335 aa).

Over 1–45 (MAQVRALHKIMALFSANSIGAMNNSDTRIAGCFLTGIPGLEQLHI) the chain is Extracellular. N-linked (GlcNAc...) asparagine glycosylation is present at Asn23. Residues 46-66 (WLSIPFCIMYITALEGNGILI) form a helical membrane-spanning segment. Residues 67–74 (CVILSQAI) lie on the Cytoplasmic side of the membrane. A helical membrane pass occupies residues 75–95 (LHEPMYIFLSMLASADVLLST). The Extracellular portion of the chain corresponds to 96–119 (TTMPKALANLWLGYSLISFDGCLT). A disulfide bond links Cys117 and Cys208. Residues 120-139 (QMFFIHFLFIHSAVLLAMAF) traverse the membrane as a helical segment. The Cytoplasmic portion of the chain corresponds to 140-158 (DRYVAICSPLRYVTILTSK). A helical transmembrane segment spans residues 159 to 179 (VIGKIVTAALSHSFIIMFPSI). Residues 180–215 (FLLEHLHYCQINIIAHTFCEHMGIAHLSCSDISINV) are Extracellular-facing. A helical transmembrane segment spans residues 216-236 (WYGLAAALLSTGLDIMLITVS). At 237–256 (YIHILQAVFRLLSQDARSKA) the chain is on the cytoplasmic side. The helical transmembrane segment at 257–277 (LSTCGSHICVILLFYVPALFS) threads the bilayer. Residues 278–293 (VFAYRFGGRSVPCYVH) lie on the Extracellular side of the membrane. A helical transmembrane segment spans residues 294 to 314 (ILLASLYVVIPPMLNPVIYGV). Over 315-335 (RTKPILEGAKQMFSNLAKGSK) the chain is Cytoplasmic.

Belongs to the G-protein coupled receptor 1 family.

It is found in the cell membrane. In terms of biological role, odorant receptor. The sequence is that of Olfactory receptor 52B6 (OR52B6) from Homo sapiens (Human).